The sequence spans 434 residues: MASSTTASLGFHYETKYVVLSYLGLLSQEKQQGPSPPGVQLDVAPQSLNPEVLLKLKSEIEEELKTLDKEVSEAFTSTGFDCHTSPVFSPANPESSIEDCLAHLGERVSQDLKEPLQKALQTILSQPVTYEAYRECTVETAVHASGWNKLLVPLVLLQHLLLELTRRGQEPLRMLLQFGVMYLEEHAAEFIIQQGGWGSVFSLEPEEEEYPGIIAEDSNDIYILPSDNSGQVSPPESPTVTTSWQSESLPVSLSASQSWHTESLPVSLGPESWQQIAMDPEEVKSLDSSGAGEKSENNSSNSDIVHVEKEEVPEEAFPGAAAPLLTQVPTVEAPEMMRAEKTSPTPSVFVELGEEELEAVTARPEAVERAEGAAQLSEERAGSRKKSHTGEAAAVRGAKSGLPAEGKAVLLFGGAAAVAILAVAVGVALALRRK.

The short motif at 14 to 30 (ETKYVVLSYLGLLSQEK) is the BH4 element. Residue Ser35 is modified to Phosphoserine. The BH3 motif lies at 97-113 (IEDCLAHLGERVSQDLK). The short motif at 144–154 (ASGWNKLLVPL) is the BH1 element. The BH2 motif lies at 190-203 (FIIQQGGWGSVFSL). Residues 224–245 (LPSDNSGQVSPPESPTVTTSWQ) form a disordered region. Residues 226 to 245 (SDNSGQVSPPESPTVTTSWQ) show a composition bias toward polar residues. One copy of the A repeat lies at 243-253 (SWQSESLPVSL). A phosphoserine mark is found at Ser256, Ser258, Ser300, Ser343, Ser347, Ser377, and Ser387. An A; approximate repeat occupies 258–268 (SWHTESLPVSL). A disordered region spans residues 282-303 (EVKSLDSSGAGEKSENNSSNSD). A disordered region spans residues 363–398 (RPEAVERAEGAAQLSEERAGSRKKSHTGEAAAVRGA). Positions 365-382 (EAVERAEGAAQLSEERAG) are enriched in basic and acidic residues. The chain crosses the membrane as a helical span at residues 409 to 429 (VLLFGGAAAVAILAVAVGVAL).

This sequence belongs to the Bcl-2 family. In terms of assembly, monomer.

Its subcellular location is the mitochondrion membrane. May promote the activation of caspase-3 and apoptosis. In Mus musculus (Mouse), this protein is Bcl-2-like protein 13 (Bcl2l13).